Here is a 542-residue protein sequence, read N- to C-terminus: MSVQKEEYDIVEKAQLSVSAESLTSDSESISHNPFDDFHKAERWRKVYESSGYEGLSKFDPEFTWTKDEEKKLVRKMDLKIFLWVFIMFAFLDLIRKNIARAVSDNFIVDLKMNTNDYNLGQTVYLVIFLASELPGNLLSKRFGPERVIPVQIVLWSVICITQAGLKNRGQFIATRCLLGMVQGGFIPDNILYLSYYYTGAELTFRLSFFWCAIPLFQILGSLLASGIIEMRGIHNLAGWQYLFIIEGFLSLSVGVASFYLMRRGPTQTGESAFHKGKSLFTEYEEKIMVNRILRDDPSKGDMSNRQPVTFKEILYTLTEFDLWPLFIQGITAFISLQTVGSYLSLILKSLNYSTFLSNILAIPGQALLLINLPLAALLSRKLKEKSLCVGIANVWVLPFIVSLVALPTDTNPWIKYILLTGILGLPYTHSILAGWVSEISNSVRSRTVGTALYNMSAQVGAIIASNMYRNDDKPYYTRGNKILLGFTCFNICMAVATKFYYISRNKYKDRKWNSMTKEEQINYLDTTKDKGMKRLDYRFIH.

Residues 1-78 (MSVQKEEYDI…EEKKLVRKMD (78 aa)) are Extracellular-facing. A helical transmembrane segment spans residues 79–99 (LKIFLWVFIMFAFLDLIRKNI). The Cytoplasmic segment spans residues 100 to 119 (ARAVSDNFIVDLKMNTNDYN). The helical transmembrane segment at 120 to 140 (LGQTVYLVIFLASELPGNLLS) threads the bilayer. Topologically, residues 141–147 (KRFGPER) are extracellular. A helical transmembrane segment spans residues 148–168 (VIPVQIVLWSVICITQAGLKN). Over 169–176 (RGQFIATR) the chain is Cytoplasmic. Residues 177 to 197 (CLLGMVQGGFIPDNILYLSYY) traverse the membrane as a helical segment. Over 198–208 (YTGAELTFRLS) the chain is Extracellular. Residues 209 to 229 (FFWCAIPLFQILGSLLASGII) form a helical membrane-spanning segment. At 230–241 (EMRGIHNLAGWQ) the chain is on the cytoplasmic side. Residues 242–262 (YLFIIEGFLSLSVGVASFYLM) form a helical membrane-spanning segment. The Extracellular portion of the chain corresponds to 263–326 (RRGPTQTGES…TLTEFDLWPL (64 aa)). A helical transmembrane segment spans residues 327–347 (FIQGITAFISLQTVGSYLSLI). Residues 348 to 359 (LKSLNYSTFLSN) lie on the Cytoplasmic side of the membrane. A helical membrane pass occupies residues 360 to 380 (ILAIPGQALLLINLPLAALLS). Residues 381 to 387 (RKLKEKS) lie on the Extracellular side of the membrane. The chain crosses the membrane as a helical span at residues 388-408 (LCVGIANVWVLPFIVSLVALP). At 409–416 (TDTNPWIK) the chain is on the cytoplasmic side. The chain crosses the membrane as a helical span at residues 417–437 (YILLTGILGLPYTHSILAGWV). Residues 438–482 (SEISNSVRSRTVGTALYNMSAQVGAIIASNMYRNDDKPYYTRGNK) lie on the Extracellular side of the membrane. The helical transmembrane segment at 483–503 (ILLGFTCFNICMAVATKFYYI) threads the bilayer. Residues 504–542 (SRNKYKDRKWNSMTKEEQINYLDTTKDKGMKRLDYRFIH) lie on the Cytoplasmic side of the membrane.

Belongs to the major facilitator superfamily. Allantoate permease family.

The protein resides in the membrane. This is an uncharacterized protein from Saccharomyces cerevisiae (strain ATCC 204508 / S288c) (Baker's yeast).